Consider the following 489-residue polypeptide: Betaine aldehyde dehydrogenase (489 aa).

K(+) is bound by residues Thr26 and Asp93. Position 150–152 (150–152 (GAW)) interacts with NAD(+). Residue Lys162 is the Charge relay system of the active site. 176–179 (KPSE) is a binding site for NAD(+). Val180 lines the K(+) pocket. 229–232 (GVET) provides a ligand contact to NAD(+). Leu245 is a binding site for K(+). Glu251 acts as the Proton acceptor in catalysis. Gly253, Cys285, and Glu386 together coordinate NAD(+). Cys285 acts as the Nucleophile in catalysis. A Cysteine sulfenic acid (-SOH) modification is found at Cys285. K(+) contacts are provided by Lys456 and Gly459. Residue Glu463 is the Charge relay system of the active site.

Belongs to the aldehyde dehydrogenase family. As to quaternary structure, dimer of dimers. K(+) is required as a cofactor.

The catalysed reaction is betaine aldehyde + NAD(+) + H2O = glycine betaine + NADH + 2 H(+). Its pathway is amine and polyamine biosynthesis; betaine biosynthesis via choline pathway; betaine from betaine aldehyde: step 1/1. Its function is as follows. Involved in the biosynthesis of the osmoprotectant glycine betaine. Catalyzes the irreversible oxidation of betaine aldehyde to the corresponding acid. This chain is Betaine aldehyde dehydrogenase, found in Burkholderia mallei (strain SAVP1).